A 275-amino-acid chain; its full sequence is MTDEADADPQPFAAPPATGAPAADKPARKPRRAAPRTSEFRIAEQPAFVLHSYPYRETSLVIDVLTRDHGRIALVAKGAKRPHSALRGVLQTFQPLSLSWSGKSELRTLTGAEWVGGMLPLAGDALLCGFYANELLVKFCAREDPHPPLFQHYLVTLTRLAHGEPPVQVLRSFERVLLRETGYAMTLKRTVARRAVEPDKLYVFDPQRGVRDAGSDAPSHWPVIAGQTLLDMEEDDYHRAQTVAQSKTLMRFLLNTYLGGTPLATRQILIDLQNL.

The interval 1–38 is disordered; the sequence is MTDEADADPQPFAAPPATGAPAADKPARKPRRAAPRTS. Residues 8 to 24 show a composition bias toward low complexity; sequence DPQPFAAPPATGAPAAD.

The protein belongs to the RecO family.

Functionally, involved in DNA repair and RecF pathway recombination. This is DNA repair protein RecO from Burkholderia pseudomallei (strain 1710b).